The chain runs to 504 residues: MNKNKIIVFDTTLRDGEQSPGASMNTAEKVELAIQLEKLGVDVIEAGFAAASPGDFDAIERICGAVSKIRVCSLARAIEKDIKAAGESIKSAKFKRIHTFIATSPIHMEYKLKLSPDDVIKKAINSIKYAKTFCDDVEFSCEDAGRSEISFIKEIVEAAINAGATTINLPDTVGYRLPSEMSYMIGELVKFVGDRAVISSHCHDDLGMSVANTIACIKAGARQIECTINGLGERAGNTALEEVVMAIKTRSDVFAPLYTDINFKEIYHSSRLVATITGIEPQPNKAIVGKNAFAHESGIHQDGVLKHKETYEIMRAEDIGLEKNSIVLGKHSGSHAFRDKLVSLGYNLSEDELANVFEKFKILADAKKEIFDDDLRELMTDELVKIPCAFEIIALSSSECNKGHASAALTLKHNDEILKDSALGNGVVDAIFKTIDRISGIKGNLKDYQVRAVSQGKDAQAKVTVKVLFENSSTIIGHGLDTDTLMATAKAYIGALNSYISMKQ.

The Pyruvate carboxyltransferase domain maps to 6-267; the sequence is IIVFDTTLRD…YTDINFKEIY (262 aa). Residues Asp15, His201, His203, and Asn237 each coordinate Mn(2+). Residues 391–504 are regulatory domain; it reads EIIALSSSEC…ALNSYISMKQ (114 aa).

Belongs to the alpha-IPM synthase/homocitrate synthase family. LeuA type 1 subfamily. Homodimer. Mn(2+) is required as a cofactor.

It localises to the cytoplasm. The catalysed reaction is 3-methyl-2-oxobutanoate + acetyl-CoA + H2O = (2S)-2-isopropylmalate + CoA + H(+). It functions in the pathway amino-acid biosynthesis; L-leucine biosynthesis; L-leucine from 3-methyl-2-oxobutanoate: step 1/4. Its function is as follows. Catalyzes the condensation of the acetyl group of acetyl-CoA with 3-methyl-2-oxobutanoate (2-ketoisovalerate) to form 3-carboxy-3-hydroxy-4-methylpentanoate (2-isopropylmalate). The chain is 2-isopropylmalate synthase from Campylobacter hominis (strain ATCC BAA-381 / DSM 21671 / CCUG 45161 / LMG 19568 / NCTC 13146 / CH001A).